A 490-amino-acid polypeptide reads, in one-letter code: Vacuolar amino acid transporter 7 (490 aa).

Topologically, residues 1–6 (MEATSS) are cytoplasmic. A helical transmembrane segment spans residues 7 to 27 (ALSSTANLVKTIVGAGTLAIP). Residues 28–34 (YSFKSDG) lie on the Vacuolar side of the membrane. Residues 35–55 (VLVGVILTLLAAVTSGLGLFV) form a helical membrane-spanning segment. Topologically, residues 56–84 (LSKCSKTLINPRNSSFFTLCMLTYPTLAP) are cytoplasmic. Residues 85-105 (IFDLAMIVQCFGVGLSYLVLI) traverse the membrane as a helical segment. Residues 106–108 (GDL) are Vacuolar-facing. Residues 109 to 129 (FPGLFGGERNYWIIASAVIII) form a helical membrane-spanning segment. Residues 130 to 143 (PLCLVKKLDQLKYS) are Cytoplasmic-facing. The chain crosses the membrane as a helical span at residues 144 to 164 (SILGLFALAYISILVFSHFVF). At 165 to 190 (ELGKGELTNILRNDICWWKIHDFKGL) the chain is on the vacuolar side. A helical transmembrane segment spans residues 191–211 (LSTFSIIIFAFTGSMNLFPMI). Topologically, residues 212 to 221 (NELKDNSMEN) are cytoplasmic. The helical transmembrane segment at 222–242 (ITFVINNSISLSTALFLIVGL) threads the bilayer. At 243 to 264 (SGYLTFGNETLGNLMLNYDPNS) the chain is on the vacuolar side. A helical membrane pass occupies residues 265-285 (IWIVIGKFCLGSMLILSFPLL). Residues 286–397 (FHPLRIAVNN…FVKSRFYWIT (112 aa)) lie on the Cytoplasmic side of the membrane. The segment at 355–374 (NGNFDNGSIESQENNNDERG) is disordered. Residues 357 to 368 (NFDNGSIESQEN) are compositionally biased toward polar residues. The helical transmembrane segment at 398 to 418 (ALLLISMYTLALSVQSFALVL) threads the bilayer. Residues 419–428 (SFVGATGSTS) lie on the Vacuolar side of the membrane. The chain crosses the membrane as a helical span at residues 429 to 449 (ISFTLPGLLGYKLIGLDSLAI). The Cytoplasmic segment spans residues 450–463 (GKMIPPKDRFYKRC). A helical membrane pass occupies residues 464 to 484 (SLLLVFYGLSVMFLSLYVTVF). Residues 485–490 (NRSDEA) are Vacuolar-facing.

The protein belongs to the amino acid/polyamine transporter 2 family.

It is found in the vacuole membrane. In terms of biological role, probable amino acid transporter of unknown specificity. This is Vacuolar amino acid transporter 7 (AVT7) from Saccharomyces cerevisiae (strain ATCC 204508 / S288c) (Baker's yeast).